Reading from the N-terminus, the 76-residue chain is uncharacterized protein (76 aa).

The helical transmembrane segment at 18–38 (FISALFFFNAVCIVSDNLLII) threads the bilayer.

It is found in the cell membrane. This is an uncharacterized protein from Escherichia coli O6:H1 (strain CFT073 / ATCC 700928 / UPEC).